An 834-amino-acid chain; its full sequence is Glycerol-3-phosphate acyltransferase (834 aa).

The short motif at 309 to 314 is the HXXXXD motif element; sequence CHRSHI.

This sequence belongs to the GPAT/DAPAT family.

Its subcellular location is the cell inner membrane. The catalysed reaction is sn-glycerol 3-phosphate + an acyl-CoA = a 1-acyl-sn-glycero-3-phosphate + CoA. The protein operates within phospholipid metabolism; CDP-diacylglycerol biosynthesis; CDP-diacylglycerol from sn-glycerol 3-phosphate: step 1/3. The sequence is that of Glycerol-3-phosphate acyltransferase from Pseudomonas paraeruginosa (strain DSM 24068 / PA7) (Pseudomonas aeruginosa (strain PA7)).